The following is a 633-amino-acid chain: tRNA uridine 5-carboxymethylaminomethyl modification enzyme MnmG (633 aa).

FAD is bound by residues 13–18 (GGGHAG), Val125, and Ser180. Residue 273-287 (GPRYCPSIEDKITRF) participates in NAD(+) binding. Gln370 is an FAD binding site.

It belongs to the MnmG family. As to quaternary structure, homodimer. Heterotetramer of two MnmE and two MnmG subunits. FAD is required as a cofactor.

Its subcellular location is the cytoplasm. Its function is as follows. NAD-binding protein involved in the addition of a carboxymethylaminomethyl (cmnm) group at the wobble position (U34) of certain tRNAs, forming tRNA-cmnm(5)s(2)U34. The sequence is that of tRNA uridine 5-carboxymethylaminomethyl modification enzyme MnmG from Alteromonas mediterranea (strain DSM 17117 / CIP 110805 / LMG 28347 / Deep ecotype).